The sequence spans 330 residues: Copper-containing nitrite reductase (330 aa).

Plastocyanin-like domains follow at residues 1–165 (GLPR…YDRV) and 166–330 (YTIG…PGPA). Cu cation-binding residues include His85, His90, His125, Cys126, His135, Met140, and His296.

It belongs to the multicopper oxidase family. In terms of assembly, homotrimer. Cu(2+) serves as cofactor. Cu(+) is required as a cofactor. The cofactor is FAD.

The protein localises to the periplasm. It catalyses the reaction nitric oxide + Fe(III)-[cytochrome c] + H2O = Fe(II)-[cytochrome c] + nitrite + 2 H(+). It functions in the pathway nitrogen metabolism; nitrate reduction (denitrification); dinitrogen from nitrate: step 2/4. This Alcaligenes xylosoxydans xylosoxydans (Achromobacter xylosoxidans) protein is Copper-containing nitrite reductase (nirK).